The primary structure comprises 404 residues: Cysteine desulfurase IscS (404 aa).

Residues 75-76 (AT), asparagine 155, glutamine 183, and 203-205 (SSH) contribute to the pyridoxal 5'-phosphate site. Residue lysine 206 is modified to N6-(pyridoxal phosphate)lysine. Threonine 243 provides a ligand contact to pyridoxal 5'-phosphate. Cysteine 328 (cysteine persulfide intermediate) is an active-site residue. Cysteine 328 contributes to the [2Fe-2S] cluster binding site.

The protein belongs to the class-V pyridoxal-phosphate-dependent aminotransferase family. NifS/IscS subfamily. In terms of assembly, homodimer. Forms a heterotetramer with IscU, interacts with other sulfur acceptors. Pyridoxal 5'-phosphate is required as a cofactor.

The protein resides in the cytoplasm. It catalyses the reaction (sulfur carrier)-H + L-cysteine = (sulfur carrier)-SH + L-alanine. Its pathway is cofactor biosynthesis; iron-sulfur cluster biosynthesis. Functionally, master enzyme that delivers sulfur to a number of partners involved in Fe-S cluster assembly, tRNA modification or cofactor biosynthesis. Catalyzes the removal of elemental sulfur atoms from cysteine to produce alanine. Functions as a sulfur delivery protein for Fe-S cluster synthesis onto IscU, an Fe-S scaffold assembly protein, as well as other S acceptor proteins. This is Cysteine desulfurase IscS from Haemophilus influenzae (strain PittEE).